A 234-amino-acid chain; its full sequence is Probable pectate lyase F (234 aa).

Residues 1-17 (MWSSIAAFPVLVPVALA) form the signal peptide.

The protein belongs to the polysaccharide lyase 3 family. Requires Ca(2+) as cofactor.

It is found in the secreted. It carries out the reaction Eliminative cleavage of (1-&gt;4)-alpha-D-galacturonan to give oligosaccharides with 4-deoxy-alpha-D-galact-4-enuronosyl groups at their non-reducing ends.. Its function is as follows. Pectinolytic enzyme consist of four classes of enzymes: pectin lyase, polygalacturonase, pectin methylesterase and rhamnogalacturonase. Among pectinolytic enzymes, pectin lyase is the most important in depolymerization of pectin, since it cleaves internal glycosidic bonds of highly methylated pectins. Favors pectate, the anion, over pectin, the methyl ester. The sequence is that of Probable pectate lyase F (plyF) from Aspergillus fumigatus (strain ATCC MYA-4609 / CBS 101355 / FGSC A1100 / Af293) (Neosartorya fumigata).